The following is a 181-amino-acid chain: Large ribosomal subunit protein uL5 (181 aa).

It belongs to the universal ribosomal protein uL5 family. Part of the 50S ribosomal subunit; part of the 5S rRNA/L5/L18/L25 subcomplex. Contacts the 5S rRNA and the P site tRNA. Forms a bridge to the 30S subunit in the 70S ribosome.

Its function is as follows. This is one of the proteins that bind and probably mediate the attachment of the 5S RNA into the large ribosomal subunit, where it forms part of the central protuberance. In the 70S ribosome it contacts protein S13 of the 30S subunit (bridge B1b), connecting the 2 subunits; this bridge is implicated in subunit movement. Contacts the P site tRNA; the 5S rRNA and some of its associated proteins might help stabilize positioning of ribosome-bound tRNAs. The polypeptide is Large ribosomal subunit protein uL5 (Colwellia psychrerythraea (strain 34H / ATCC BAA-681) (Vibrio psychroerythus)).